The primary structure comprises 102 residues: Redox- and pH-responsive transcriptional regulator WhiB3 (102 aa).

The 4Fe-4S Wbl-type domain maps to 22 to 86; sequence LCRGMDSSMF…GGLSESERDL (65 aa). The [4Fe-4S] cluster site is built by C23, C53, C56, and C62.

Belongs to the WhiB family. Homodimer. Interacts with the C-terminal 54 residues of sigma factor SigA (RpoV). [4Fe-4S] cluster is required as a cofactor. In terms of processing, the 4Fe-4S cluster interacts with NO, forming a protein-bound dinitrosyliron dithiol complex. The 4Fe-4S cluster interacts with O(2), leading to its degradation. Cluster loss takes about 2 hours. Once in the apo-form the cysteines oxidize to form 2 intramolecular disulfide bonds.

Its subcellular location is the cytoplasm. Functionally, a redox-sensitive transcriptional regulator. Maintains intracellular redox homeostasis by regulating catabolic metabolism and polyketide biosynthesis. Regulates expression of the redox buffer ergothioneine (ERG) in a carbon-source-dependent manner; loss of ERG or mycothiol (MSH, the other major redox buffer in this bacteria) leads to respiratory alterations and bioenergetic deficiencies that negatively impact virulence. In response to low external pH (like that found in host macrophage phagosomes) alters endogenous gene expression leading to acid resistance; MSH and WhiB3 are probably part of a regulatory circuit that mediates gene expression upon acid stress. Regulates pathogenic lipid synthesis, coordinating proprionate flux (and other host-derived fatty acid oxidation intermediates) into methyl-branched fatty acids (polyacyltrehalose, phthiocerol dimycocerosates, sulfolipids) and the storage lipid triacylglycerol, functioning as reductive sink. During intracellular growth M.tuberculosis uses host fatty acids as an energy source, generating large quantities of proprionate and NADH/NADPH, which are toxic and highly reducing respectively. WhiB3 is thought to help dissipate proprionate and NADH/NADPH by switching to the in vivo carbon source and via lipid anabolism. Responds to NO and O(2). Regulates expression of genes encoding modular polyketide synthases such as pks2, pks3 and fbpA. The oxidized apo-form of WhiB3 binds DNA (with 2 intramolecular disulfide bonds); holo-WhiB3 (with the 4Fe-4S cluster) binds DNA considerably less well. Discriminates poorly between specific and non-specific DNA-binding. Plays a role in virulence and nutritional stress. In its apo-form can act as a protein disulfide reductase. In terms of biological role, may respond to mycothiol (MSH) redox potential (E-MSH) which decreases at pH 4.5 for up to 72 hours, indicative of cellular reductive stress; deletion of whiB3 leads to a lesser E-MSH at 72 hours, indicative of cellular oxidative stress. Probably via its effects on production of polyketide lipids, regulates host gene expression, leading to blockage of phagosome maturation. Equilibration of extra- and intracytoplasmic pH kills bacteria. The protein is Redox- and pH-responsive transcriptional regulator WhiB3 (whiB3) of Mycobacterium tuberculosis (strain ATCC 25618 / H37Rv).